A 423-amino-acid polypeptide reads, in one-letter code: Large ribosomal subunit protein mL37 (423 aa).

Residues 1-29 constitute a mitochondrion transit peptide; it reads MALASGPALRALAGSGRLGLGGYGTPKRG.

It belongs to the mitochondrion-specific ribosomal protein mL37 family. Component of the mitochondrial ribosome large subunit (39S) which comprises a 16S rRNA and about 50 distinct proteins.

The protein localises to the mitochondrion. This Mus musculus (Mouse) protein is Large ribosomal subunit protein mL37 (Mrpl37).